Reading from the N-terminus, the 351-residue chain is MKKFIHIDMDCFYAAVEMRDNPKLANVPLAIGGNSRRGVLSTANYIAREYGVRSAMSNYHAKQLCPDLVIVPGRMAVYKDVSTQIRAVFSRYTDLIEPLSLDEAYLDVTHSEQCKGSATLIAQQIRADIYNATGLTASAGIAPIKFIAKIASDENKPNGQFVVLPDQVDAFLAQLPLGKIPGVGKVTLEKLNLKGLYTGQDVRKKGVNWMQQHVGNFGVSLYQKCAGEHIGRVSTERVRKSLSVEHTYEYNKNSLQECLEQLPSLLEELTTRLNKQQLQNQVNKLSVKVKFANFVVTSADQAHQQLNSDIFSELLAKAYQRGLQQPVRLLGIGVGIKNQPQHNLQLSILDM.

The 181-residue stretch at 4 to 184 (FIHIDMDCFY…LPLGKIPGVG (181 aa)) folds into the UmuC domain. Mg(2+) is bound by residues Asp8 and Asp102. The active site involves Glu103.

The protein belongs to the DNA polymerase type-Y family. As to quaternary structure, monomer. Mg(2+) serves as cofactor.

The protein resides in the cytoplasm. It carries out the reaction DNA(n) + a 2'-deoxyribonucleoside 5'-triphosphate = DNA(n+1) + diphosphate. Functionally, poorly processive, error-prone DNA polymerase involved in untargeted mutagenesis. Copies undamaged DNA at stalled replication forks, which arise in vivo from mismatched or misaligned primer ends. These misaligned primers can be extended by PolIV. Exhibits no 3'-5' exonuclease (proofreading) activity. May be involved in translesional synthesis, in conjunction with the beta clamp from PolIII. The sequence is that of DNA polymerase IV from Pseudoalteromonas translucida (strain TAC 125).